The sequence spans 407 residues: Snake venom metalloproteinase ACLH (407 aa).

The first 20 residues, 1 to 20 (MIQVLLVTLCLAAFPYQGSS), serve as a signal peptide directing secretion. The propeptide occupies 21-187 (IILESGNVND…PIKKASQLNL (167 aa)). Residues 193–389 (RYVELVTVVD…ENPQCILNKP (197 aa)) enclose the Peptidase M12B domain. Ca(2+) contacts are provided by Glu-196 and Asp-280. Disulfide bonds link Cys-304–Cys-384, Cys-344–Cys-368, and Cys-346–Cys-351. Position 329 (His-329) interacts with Zn(2+). Glu-330 is a catalytic residue. Zn(2+) contacts are provided by His-333 and His-339. Asn-367 carries an N-linked (GlcNAc...) asparagine glycan. Ca(2+) contacts are provided by Cys-384 and Asn-387.

It belongs to the venom metalloproteinase (M12B) family. P-I subfamily. In terms of assembly, monomer. The cofactor is Zn(2+). In terms of processing, contains sialic acid terminally alpha(2-6)-linked to galactose in a complex N-glycan chain. Expressed by the venom gland.

It localises to the secreted. This zinc hemorrhagic metalloproteinase has fibrino(geno)lytic activities. It causes hemorrhage and has myonecrotic activity on both fiber types I and II. The recombinant enzyme, without post-translational modifications, also has proteolytic activity, but does not show any hemorrhagic activity. This chain is Snake venom metalloproteinase ACLH, found in Agkistrodon contortrix laticinctus (Broad-banded copperhead).